Consider the following 218-residue polypeptide: Insulin-induced gene 2 protein (218 aa).

Residues 1–21 are Cytoplasmic-facing; the sequence is MGDRENVSYGSRPILAQKMNL. The helical transmembrane segment at 22 to 44 threads the bilayer; it reads LLRGFLLFLIGVFLALVLNLLQV. The Lumenal segment spans residues 45 to 63; the sequence is QRNVTLFPPDVLSSLFSSA. Residues 64 to 81 traverse the membrane as a helical segment; sequence WWVPLCCGTAAAAIGLLY. The Cytoplasmic portion of the chain corresponds to 82–96; that stretch reads PCIDRHLGEPHKFKR. A helical membrane pass occupies residues 97–119; that stretch reads EWSSVMRCVAVFVGINHASAKVD. Residues 120 to 122 lie on the Lumenal side of the membrane; the sequence is FAN. Residues 123 to 141 form a helical membrane-spanning segment; it reads NMQLSLTLAALSIGLWWTF. Residues 142 to 146 lie on the Cytoplasmic side of the membrane; the sequence is DRSRS. The helical transmembrane segment at 147–168 threads the bilayer; the sequence is GLGLGIGISFFATLVSQLLVYN. Topologically, residues 169 to 182 are lumenal; that stretch reads GVYEYTAPDFLYVR. Residues 183-200 traverse the membrane as a helical segment; sequence SWLPCIFFAGGITMGNIG. Topologically, residues 201–218 are cytoplasmic; the sequence is RQLEMYERKALVEKSHRD. The KxHxx motif lies at 212–218; sequence VEKSHRD.

The protein belongs to the INSIG family. As to quaternary structure, interacts with scap; interaction is direct and only takes place in the presence of sterols; it prevents interaction between scap and the coat protein complex II (COPII). Associates with the SCAP-SREBP complex; association is mediated via its interaction with scap and only takes place in the presence of sterols.

It is found in the endoplasmic reticulum membrane. Functionally, oxysterol-binding protein that mediates feedback control of cholesterol synthesis by controlling both endoplasmic reticulum to Golgi transport of scap and degradation of hmgcr. Acts as a negative regulator of cholesterol biosynthesis by mediating the retention of the SCAP-SREBP complex in the endoplasmic reticulum, thereby blocking the processing of sterol regulatory element-binding proteins (SREBPs). Binds oxysterol, including 22-hydroxycholesterol, 24-hydroxycholesterol, 25-hydroxycholesterol and 27-hydroxycholesterol, regulating interaction with scap and retention of the SCAP-SREBP complex in the endoplasmic reticulum. In presence of oxysterol, interacts with scap, retaining the SCAP-SREBP complex in the endoplasmic reticulum, thereby preventing scap from escorting SREBPs to the Golgi. Sterol deprivation reduce oxysterol-binding, disrupting the interaction between insig2 and scap, thereby promoting Golgi transport of the SCAP-SREBP complex, followed by processing and nuclear translocation of SREBPs. Also regulates cholesterol synthesis by regulating degradation of hmgcr. The chain is Insulin-induced gene 2 protein from Xenopus laevis (African clawed frog).